A 499-amino-acid chain; its full sequence is MDNMNHEELNDQLIVRREKLHNLREQGIDPFGKRFERTNSTTDLVSLYGEFSKEELEEKEIAVSIAGRIMTKRGKGKAGFAHVQDLHGQVQIYVRKDAVGDDEYELFKTADLGDLVGIEGKVFKTNVGELSVKATGFTLLTKSLRPLPDKYHGLKDVEQRYRQRYLDLITSMESRETFVTRSKIIREMRRYLDDNGYLEVETPMMHAIAGGASARPFTTHHNALDMELYMRIAIELHLKRLIVGGLEKVYEIGRVFRNEGVSTRHNPEFTMIELYEAYADYKDIMKLTEDMVAHIAKKVLGTTTIQYGDYEINLEPEWTRLHMVDAIKQYSGADFWNPMSVEEARELAKEHNVEIKDTMEVGHIINEFFEQKVEDKLIQPTFIYGHPVEISPLAKKNDEDPRFTDRFELFIVAREHANAFTELNDPIDQKERFEAQLKEREQGNDEAHMMDDDYIEALEYGMPPTGGLGIGIDRLVMLLTNAPSIRDVLLFPAMRHKQD.

2 residues coordinate Mg(2+): Glu408 and Glu415.

Belongs to the class-II aminoacyl-tRNA synthetase family. Homodimer. Requires Mg(2+) as cofactor.

The protein resides in the cytoplasm. It carries out the reaction tRNA(Lys) + L-lysine + ATP = L-lysyl-tRNA(Lys) + AMP + diphosphate. In Bacillus cereus (strain B4264), this protein is Lysine--tRNA ligase.